A 191-amino-acid chain; its full sequence is MKVQSEIIEKLEIFQNLIKKWNKSINLISDNTIPNFWQRHILDSLQLMQYISNKEIHLIDIGSGAGFPGIVLSIAGVTKVSLIEADLRKCIFLAKASKISNNSIQIINQRIEKIEIDCSILTCRAFSNLNTIFNYTQNISVREKFLLLKGKSYLTEIVEAKERWSFDYLIHQSITCGSGKILEINNLTKII.

S-adenosyl-L-methionine contacts are provided by residues Gly-62, Phe-67, 111–112, and Arg-124; that span reads IE.

This sequence belongs to the methyltransferase superfamily. RNA methyltransferase RsmG family.

Its subcellular location is the cytoplasm. It catalyses the reaction guanosine(527) in 16S rRNA + S-adenosyl-L-methionine = N(7)-methylguanosine(527) in 16S rRNA + S-adenosyl-L-homocysteine. In terms of biological role, specifically methylates the N7 position of guanine in position 527 of 16S rRNA. This is Ribosomal RNA small subunit methyltransferase G from Rickettsia prowazekii (strain Madrid E).